The following is a 429-amino-acid chain: Glutamate-1-semialdehyde 2,1-aminomutase 2 (429 aa).

Lysine 268 carries the N6-(pyridoxal phosphate)lysine modification.

It belongs to the class-III pyridoxal-phosphate-dependent aminotransferase family. HemL subfamily. Homodimer. It depends on pyridoxal 5'-phosphate as a cofactor.

It localises to the cytoplasm. It catalyses the reaction (S)-4-amino-5-oxopentanoate = 5-aminolevulinate. It functions in the pathway porphyrin-containing compound metabolism; protoporphyrin-IX biosynthesis; 5-aminolevulinate from L-glutamyl-tRNA(Glu): step 2/2. This Bacillus mycoides (strain KBAB4) (Bacillus weihenstephanensis) protein is Glutamate-1-semialdehyde 2,1-aminomutase 2.